Consider the following 381-residue polypeptide: E3 ubiquitin-protein ligase RNF13 (381 aa).

The N-terminal stretch at 1–34 (MLLSIGMLMLSATQVYTILTVQLFAFLNLLPVEA) is a signal peptide. Over 35–182 (DILAYNFENA…VPEFSLPLEY (148 aa)) the chain is Lumenal. A PA domain is found at 65–160 (KGFLINSKPE…GESSANSLKD (96 aa)). Asparagine 88 carries an N-linked (GlcNAc...) asparagine glycan. A helical transmembrane segment spans residues 183-203 (YLIPFLIIVGICLILIVIFMI). The Cytoplasmic segment spans residues 204 to 381 (TKFVQDRHRA…ERDYNIANTV (178 aa)). The RING-type; atypical zinc finger occupies 240 to 282 (CAICLDEYEDGDKLRILPCSHAYHCKCVDPWLTKTKKTCPVCK). A disordered region spans residues 285–381 (VVPSQGDSDS…ERDYNIANTV (97 aa)). Composition is skewed to acidic residues over residues 292-304 (SDSD…EENE) and 339-357 (SDYE…AENE).

In terms of assembly, interacts with ERN1. In terms of processing, autoubiquitinated. As to expression, widely expressed (at protein level). In normal pancreas, expressed in islets, but not in ducts, nor in acini (at protein level).

It localises to the endoplasmic reticulum membrane. The protein resides in the late endosome membrane. The protein localises to the lysosome membrane. It is found in the nucleus inner membrane. The catalysed reaction is S-ubiquitinyl-[E2 ubiquitin-conjugating enzyme]-L-cysteine + [acceptor protein]-L-lysine = [E2 ubiquitin-conjugating enzyme]-L-cysteine + N(6)-ubiquitinyl-[acceptor protein]-L-lysine.. It participates in protein modification; protein ubiquitination. Its function is as follows. E3 ubiquitin-protein ligase that regulates cell proliferation. Involved in apoptosis regulation. Mediates ER stress-induced activation of JNK signaling pathway and apoptosis by promoting ERN1 activation and splicing of XBP1 mRNA. Also involved in protein trafficking and localization. In Homo sapiens (Human), this protein is E3 ubiquitin-protein ligase RNF13.